We begin with the raw amino-acid sequence, 511 residues long: Glucans biosynthesis protein G (511 aa).

Positions 1 to 22 (MMKMRWLSAAVMLTLYTSSSWA) are cleaved as a signal peptide.

This sequence belongs to the OpgD/OpgG family.

The protein localises to the periplasm. The protein operates within glycan metabolism; osmoregulated periplasmic glucan (OPG) biosynthesis. Involved in the biosynthesis of osmoregulated periplasmic glucans (OPGs). The sequence is that of Glucans biosynthesis protein G from Shigella boydii serotype 4 (strain Sb227).